We begin with the raw amino-acid sequence, 508 residues long: O-acetyltransferase pigM (508 aa).

Residues 166–188 (TPAPDERGKISPSLEDAAGSPRT) are disordered.

It functions in the pathway secondary metabolite biosynthesis. Functionally, O-acetyltransferase; part of the gene cluster that mediates the biosynthesis of azaphilone pigments (MonAzPs), a complex mixture of compounds with a common azaphilone skeleton very widely used as food colorants. PigM and pigO are involved in the elimination of the omega-1 alcohol with pigM acting as an O-acetyltransferase that synthesizes the O-11 acetyl intermediate whereas pigO eliminates acetic acid to yield an intermediate with a C10(11) double bond. The first step of the pathway is performed by the nrPKS pigA that forms the hexaketide precursor from successive condensations of five malonyl-CoA units, with a simple acetyl-CoA starter unit. The role of esterase pigG is not clear, but it may play at most a supplementary role in the formation of the benzaldehyde produced by the pigA nrPKS. This very reactive benzaldehyde is intercepted by the pigC ketoreductase that to provide the first stable enzyme-free MonAzPs intermediate, 6-(4-hydroxy-2-oxopentyl)-3-methyl-2,4-dioxocyclohexane carbaldehyde, also known as M7PKS-1. The FAD-dependent monooxygenase pigN hydroxylates M7PKS-1 at C-4, which triggers the formation of the pyran ring. PigJ, pigK and pigD are involved in the acetylation of the pyran ring. PigJ and pigK form the two subunits of a dedicated fungal FAS that produces the side chain fatty acyl moiety of MonAzPs and pigD transfers the fatty acyl chain to the C-4 alcohol. PigM and pigO are involved in the elimination of the omega-1 alcohol. PigM acts as an O-acetyltransferase that synthesizes the putative O-11 acetyl intermediate whereas pigO eliminates acetic acid to yield an intermediate with a C10(11) double bond. The dehydration of the C-11 alcohol followed by the reduction of the C6(7) double bond by the NAD(P)H-dependent oxidoreductase pigE increases the electrophilicity of the C-5 ketone of the resulting acyl benzopyran. This in turn sets up the C-5 ketone for an intramolecular Knoevenagel aldol condensation with the C-20 enol of the side chain. This condensation affords the characteristic linear tricyclic carbon skeletons of the yellow pigments that serve as the common precursors for the classical yellow pigments monascin and ankaflavin, orange pigments rubopunctatin and monascorubrin, and red pigments ribropunctamine and monascorubramine. The FAD-dependent oxidoreductase pigF is especially invoved in the biosynthesis of orange and red pigments via desaturation of C6(7). This is O-acetyltransferase pigM from Monascus ruber (Mold).